Reading from the N-terminus, the 249-residue chain is 2,3-bisphosphoglycerate-dependent phosphoglycerate mutase (249 aa).

Residues 8–15, 21–22, Arg60, 87–90, Lys98, 114–115, and 183–184 contribute to the substrate site; these read RHGESTWN, TG, ERHY, RR, and GN. His9 serves as the catalytic Tele-phosphohistidine intermediate. Glu87 (proton donor/acceptor) is an active-site residue.

This sequence belongs to the phosphoglycerate mutase family. BPG-dependent PGAM subfamily.

The enzyme catalyses (2R)-2-phosphoglycerate = (2R)-3-phosphoglycerate. It participates in carbohydrate degradation; glycolysis; pyruvate from D-glyceraldehyde 3-phosphate: step 3/5. Functionally, catalyzes the interconversion of 2-phosphoglycerate and 3-phosphoglycerate. The sequence is that of 2,3-bisphosphoglycerate-dependent phosphoglycerate mutase from Methanoregula boonei (strain DSM 21154 / JCM 14090 / 6A8).